A 449-amino-acid chain; its full sequence is UDP-N-acetylmuramoylalanine--D-glutamate ligase (449 aa).

Position 118–124 (118–124 (GSNGKTT)) interacts with ATP.

This sequence belongs to the MurCDEF family.

Its subcellular location is the cytoplasm. It catalyses the reaction UDP-N-acetyl-alpha-D-muramoyl-L-alanine + D-glutamate + ATP = UDP-N-acetyl-alpha-D-muramoyl-L-alanyl-D-glutamate + ADP + phosphate + H(+). It functions in the pathway cell wall biogenesis; peptidoglycan biosynthesis. Functionally, cell wall formation. Catalyzes the addition of glutamate to the nucleotide precursor UDP-N-acetylmuramoyl-L-alanine (UMA). This Leuconostoc mesenteroides subsp. mesenteroides (strain ATCC 8293 / DSM 20343 / BCRC 11652 / CCM 1803 / JCM 6124 / NCDO 523 / NBRC 100496 / NCIMB 8023 / NCTC 12954 / NRRL B-1118 / 37Y) protein is UDP-N-acetylmuramoylalanine--D-glutamate ligase.